A 396-amino-acid chain; its full sequence is ATP-dependent RNA helicase eIF4A (396 aa).

The Q motif signature appears at 23–51; sequence DSFDEMNLKSELLRGIYAYGFERPSAIQQ. A Helicase ATP-binding domain is found at 54–224; the sequence is IMPVIKGHDV…TKFMRDPVRI (171 aa). 67 to 74 is an ATP binding site; it reads AQSGTGKT. Residues 172–175 carry the DEAD box motif; sequence DEAD. Positions 235 to 396 constitute a Helicase C-terminal domain; the sequence is GIKQFYIAVE…EMPMNVADLI (162 aa).

The protein belongs to the DEAD box helicase family. eIF4A subfamily. In terms of assembly, component of the eIF4F complex, which composition varies with external and internal environmental conditions. It is composed of at least eIF4A, eIF4E and eIF4G.

The protein localises to the cytoplasm. The catalysed reaction is ATP + H2O = ADP + phosphate + H(+). In terms of biological role, ATP-dependent RNA helicase which is a subunit of the eIF4F complex involved in cap recognition and is required for mRNA binding to ribosome. In the current model of translation initiation, eIF4A unwinds RNA secondary structures in the 5'-UTR of mRNAs which is necessary to allow efficient binding of the small ribosomal subunit, and subsequent scanning for the initiator codon. The sequence is that of ATP-dependent RNA helicase eIF4A (TIF1) from Pyricularia oryzae (strain 70-15 / ATCC MYA-4617 / FGSC 8958) (Rice blast fungus).